The following is a 595-amino-acid chain: uncharacterized protein (595 aa).

A disordered region spans residues 112–180 (VRPPGYDPES…KDVFGRALPT (69 aa)). Composition is skewed to basic and acidic residues over residues 120–133 (ESAK…EKHK) and 161–174 (RTQE…KDVF). The CCHC-type; degenerate zinc finger occupies 211 to 228 (VKCLRCGNFGHQSGDRDC). Disordered regions lie at residues 254–290 (HTDP…IVAE) and 310–595 (KSMS…RRRN). Basic and acidic residues predominate over residues 256-267 (DPSEPLKWELKQ). 2 stretches are compositionally biased toward basic residues: residues 316-331 (KKRK…KHSS) and 351-364 (RGSK…KKSK). 3 stretches are compositionally biased toward basic and acidic residues: residues 414 to 428 (HYYD…EIVD), 470 to 539 (VSEK…HVYE), and 547 to 565 (FSDR…ESNR). Basic residues predominate over residues 584-595 (RKHRYSTNRRRN).

This is an uncharacterized protein from Arabidopsis thaliana (Mouse-ear cress).